The following is a 238-amino-acid chain: D/L-lactic acid transporter (238 aa).

Helical transmembrane passes span 2-22 and 39-59; these read VHQL…GVGV and IFAI…FGNV. Residues 62–64 carry the NPA 1 motif; that stretch reads NPA. 3 helical membrane passes run 80–100, 135–155, and 158–178; these read FIPY…IVWI, FFVE…ISEI, and PGIV…GLGG. The short motif at 185 to 187 is the NPA 2 element; it reads NLA. A helical membrane pass occupies residues 211-231; it reads YGIIVPGIAPFVGAAIAAWFM.

This sequence belongs to the MIP/aquaporin (TC 1.A.8) family.

Its subcellular location is the cell membrane. Its function is as follows. Transporter that facilitates the transmembrane diffusion of D/L-lactic acid. Is involved in the cellular racemization of lactate and lactate metabolism. The transported molecule is indeed lactic acid and not the lactate anion, in agreement with the assumption that, with very few exceptions, MIPs (major intrinsic proteins) only facilitate the transport of uncharged solutes. Also facilitates urea and H(2)O(2) diffusion across membranes, but is not permeable to water, glycerol and dihydroxyacetone. This is D/L-lactic acid transporter from Lactiplantibacillus plantarum (strain ATCC BAA-793 / NCIMB 8826 / WCFS1) (Lactobacillus plantarum).